The chain runs to 675 residues: MAFTAQQQLRAAELRQLLNRAAHAYYVLDAPEFEDAVYDRLYRELLDLEQQHPDLLSADSPTQRVGGPPAEGFSSVEHRIGMLSLDNAFNAEELQAWDARLGRQLEDNPERQREYVCELKIDGNALALSYADGVLVRAATRGDGSRGEEITANVRTIQAVPLRLQLKQPPAWVEVRGEAFIPDDTFEAINAERQQRGEALFANPRNACAGTLRQLDPKAVAARRLDFFAYTVHLPADEMGPKSQWDALQWLETAGFRVNPHRERTSGADGVVAFYDRWEEQRHQLPYATDGVVVKLDALERQQLAGFTQKAPRWAIALKYAAEEAPSRLLRLVAQVGRTGVVTPVAEFEAVPLAGTSVSRATLHNADRLEELDLHSGDTIVVRKAGEIIPEVLRVLPELRPEGAEQLELPSHCPECGSLLVRESGEAATRCVNSSCPAILRGALRHWVSRQAMDVDGLGGKLIEQLVDRGLVRSIADLYRLDAALLASLERMGEQSASNLIEALAASRQRPWHRLLYALGIHHIGSVNAKTLAAAFPSWEALQSASEEALNELYGIGPEISQSMQQWCSTEANQSLMAELAALELPLASDDSSAESAGAIGALTGQTLVLTGTLPNLSRLEAQALIEAAGGKVTGSVSKKTNYVVAGSEAGSKLQKAEKLGVAVIDEAELKALLS.

NAD(+) contacts are provided by residues 35–39 (DAVYD), 84–85 (SL), and Glu-118. The active-site N6-AMP-lysine intermediate is Lys-120. NAD(+) contacts are provided by Arg-141, Glu-178, Lys-295, and Lys-319. Residues Cys-413, Cys-416, Cys-431, and Cys-436 each contribute to the Zn(2+) site. The region spanning 598–675 (GAIGALTGQT…DEAELKALLS (78 aa)) is the BRCT domain.

The protein belongs to the NAD-dependent DNA ligase family. LigA subfamily. Requires Mg(2+) as cofactor. Mn(2+) serves as cofactor.

The catalysed reaction is NAD(+) + (deoxyribonucleotide)n-3'-hydroxyl + 5'-phospho-(deoxyribonucleotide)m = (deoxyribonucleotide)n+m + AMP + beta-nicotinamide D-nucleotide.. Functionally, DNA ligase that catalyzes the formation of phosphodiester linkages between 5'-phosphoryl and 3'-hydroxyl groups in double-stranded DNA using NAD as a coenzyme and as the energy source for the reaction. It is essential for DNA replication and repair of damaged DNA. This is DNA ligase from Synechococcus sp. (strain RCC307).